Here is a 137-residue protein sequence, read N- to C-terminus: Ribosome-binding factor A (137 aa).

This sequence belongs to the RbfA family. As to quaternary structure, monomer. Binds 30S ribosomal subunits, but not 50S ribosomal subunits or 70S ribosomes.

The protein localises to the cytoplasm. Its function is as follows. One of several proteins that assist in the late maturation steps of the functional core of the 30S ribosomal subunit. Associates with free 30S ribosomal subunits (but not with 30S subunits that are part of 70S ribosomes or polysomes). Required for efficient processing of 16S rRNA. May interact with the 5'-terminal helix region of 16S rRNA. The sequence is that of Ribosome-binding factor A from Cereibacter sphaeroides (strain ATCC 17029 / ATH 2.4.9) (Rhodobacter sphaeroides).